We begin with the raw amino-acid sequence, 668 residues long: MSLADLTKTNVDEQFSSVALENNRRSAECKRSPGTGDFSRNSSASAKSVDYSRSQCSCGSLSSQYDYSEDFLCDCSEKAINRNYLKQPVVKEKEKKKYNVSKISQSKGQKEISVEKKHTWNASLFNSQIHMIAQRRDAMAHRILSARLHKIKGLKNELADMHHKLEAILTENQFLKQLQLRHLKAIGKYENSQNNLPQIMAKHQNEVKNLRQLLRKSQEKERTVSRKLRETDSQLLKTKDTLQALQKLSEDKNLAEREELTHKLSIITTKMEANDKKIQSLEKQLRLNSRVFSRQLAIETRKTLAAQTATKTLQVEVKHLQQKLKEKDRELEIKNIYSHRILKNLHDTEDYPKVSSTKSVQADRKSLPFTSMRHQGTQKSDVPPLTTKGKKATGNMNHKEKSTEINREIPHCVNKLPKQEDSKTKYEDLSREEKHLEVQVLLENTGRQKDKKEDQEKKTIFVKEEQELPPKIIEVIHPERESTQEDVLVREKFKRSMQRNGMDDTPDKCTAPYTKGPLRQRRHYSFTEATENLHHGLPASGGPANAGNTKYSHSTSKHLSNREEMELEHSDSGYEPSFGKSSRIKVKDTTFRDKKSSLMEELFGSGYVLKTDQSSPGVAKGSEEPLQSKESHPPSQASASNAFGDSKVTVVNSIKPSSPTEGKRKIII.

The segment at 17 to 44 (SVALENNRRSAECKRSPGTGDFSRNSSA) is disordered. The segment covering 22-31 (NNRRSAECKR) has biased composition (basic and acidic residues). 2 coiled-coil regions span residues 148–259 (LHKI…EREE) and 305–336 (AAQT…IKNI). The disordered stretch occupies residues 351–402 (YPKVSSTKSVQADRKSLPFTSMRHQGTQKSDVPPLTTKGKKATGNMNHKEKS). Residues 368–380 (PFTSMRHQGTQKS) show a composition bias toward polar residues. Positions 420 to 440 (EDSKTKYEDLSREEKHLEVQV) form a coiled coil. 3 disordered regions span residues 495 to 520 (RSMQ…PLRQ), 533 to 581 (LHHG…FGKS), and 605 to 668 (SGYV…KIII). The span at 546–558 (AGNTKYSHSTSKH) shows a compositional bias: polar residues. 2 stretches are compositionally biased toward basic and acidic residues: residues 560-572 (SNRE…HSDS) and 621-632 (GSEEPLQSKESH). The span at 633 to 660 (PPSQASASNAFGDSKVTVVNSIKPSSPT) shows a compositional bias: polar residues.

It belongs to the LCA5 family.

This Macaca fascicularis (Crab-eating macaque) protein is Lebercilin-like protein.